We begin with the raw amino-acid sequence, 86 residues long: Large ribosomal subunit protein bL27 (86 aa).

Residues 1–10 (MAQKKGGGST) are compositionally biased toward gly residues. The segment at 1 to 21 (MAQKKGGGSTRNGRDSESKRL) is disordered.

It belongs to the bacterial ribosomal protein bL27 family.

In Cupriavidus taiwanensis (strain DSM 17343 / BCRC 17206 / CCUG 44338 / CIP 107171 / LMG 19424 / R1) (Ralstonia taiwanensis (strain LMG 19424)), this protein is Large ribosomal subunit protein bL27.